The chain runs to 532 residues: 56 kDa type-specific antigen (532 aa).

An N-terminal signal peptide occupies residues 1-22; sequence MKKIMLIASAMSALSLPFSASA. Residues 67-87 form a helical membrane-spanning segment; it reads TNGLPFGGTLAAGMTIAPGFR. The disordered stretch occupies residues 401 to 428; the sequence is QEEDAKNQGEGDCKQQQGTSEKSKKGKD. Basic and acidic residues predominate over residues 403–413; the sequence is EDAKNQGEGDC. Residues 480 to 500 traverse the membrane as a helical segment; that stretch reads TGMVASGALGVAINAAEGVYV.

It is found in the cell membrane. May be an adherent factor for rickettsial adsorption to the host-cell surface and a determinant of virulence of individual rickettsial strain. It is the major outer membrane protein. This is 56 kDa type-specific antigen from Orientia tsutsugamushi (Rickettsia tsutsugamushi).